The primary structure comprises 1209 residues: DNA-directed RNA polymerase subunit beta'' (1209 aa).

The Zn(2+) site is built by Cys-233, Cys-308, Cys-315, and Cys-318.

This sequence belongs to the RNA polymerase beta' chain family. RpoC2 subfamily. In terms of assembly, in plastids the minimal PEP RNA polymerase catalytic core is composed of four subunits: alpha, beta, beta', and beta''. When a (nuclear-encoded) sigma factor is associated with the core the holoenzyme is formed, which can initiate transcription. The cofactor is Zn(2+).

The protein localises to the plastid. Its subcellular location is the chloroplast. It carries out the reaction RNA(n) + a ribonucleoside 5'-triphosphate = RNA(n+1) + diphosphate. Functionally, DNA-dependent RNA polymerase catalyzes the transcription of DNA into RNA using the four ribonucleoside triphosphates as substrates. The polypeptide is DNA-directed RNA polymerase subunit beta'' (Pinus koraiensis (Korean pine)).